A 454-amino-acid chain; its full sequence is Keratin, type I cuticular Ha5 (454 aa).

Residues 1–97 form a head region; the sequence is MASKCLKASF…FGEGILTGNE (97 aa). Residues 97–407 form the IF rod domain; it reads EKETMQFLND…GLLDSEDCKL (311 aa). The interval 98–125 is coil 1A; it reads KETMQFLNDRLASYLEKCGSWSGRTRSW. The interval 134–142 is linker 1; sequence SNSALPVPD. A coil 1B region spans residues 143–243; it reads YQSYFQTIEE…HEEEVNSLRC (101 aa). The interval 244 to 259 is linker 12; it reads QLGDRLNVEVDAAPPV. The coil 2 stretch occupies residues 260–403; it reads DLNRVLNEMR…NTYRGLLDSE (144 aa). Residues 404–454 are tail; that stretch reads DCKLPCNPCAPDHSPSKSCLPCLPAASCGPGMARTTCSPRPICVPCPGSRF.

It belongs to the intermediate filament family.

The sequence is that of Keratin, type I cuticular Ha5 from Bos taurus (Bovine).